The following is a 318-amino-acid chain: DNA-directed RNA polymerase subunit alpha 2 (318 aa).

The alpha N-terminal domain (alpha-NTD) stretch occupies residues 1–227 (MALENLLHPT…NQLRNIVDIE (227 aa)). The alpha C-terminal domain (alpha-CTD) stretch occupies residues 242 to 318 (INPILLKHVE…TLIENWPQDL (77 aa)).

The protein belongs to the RNA polymerase alpha chain family. As to quaternary structure, homodimer. The RNAP catalytic core consists of 2 alpha, 1 beta, 1 beta' and 1 omega subunit. When a sigma factor is associated with the core the holoenzyme is formed, which can initiate transcription.

The enzyme catalyses RNA(n) + a ribonucleoside 5'-triphosphate = RNA(n+1) + diphosphate. Functionally, DNA-dependent RNA polymerase catalyzes the transcription of DNA into RNA using the four ribonucleoside triphosphates as substrates. The protein is DNA-directed RNA polymerase subunit alpha 2 of Francisella tularensis subsp. novicida (strain U112).